Here is an 849-residue protein sequence, read N- to C-terminus: Probable ATP-dependent RNA helicase ddx20 (849 aa).

A disordered region spans residues 9 to 39; that stretch reads FSNPMNSNSSNNIENNNNSNNNNNNFKNNFK. Residues 55–83 carry the Q motif motif; it reads ITFSELLLQKEVLKGLEDGGYQRPSPIQL. ATP contacts are provided by residues R77, Q82, 99 to 106, and 102 to 107; these read AKSGTGKT and GTGKTI. Residues 86–319 form the Helicase ATP-binding domain; it reads IPLGISGVDL…KLYMNNENLV (234 aa). The DEAD box signature appears at 255–258; the sequence is DEAD. The Helicase C-terminal domain occupies 355-499; it reads KCKSLVLVLE…QIENENENEN (145 aa). 4 disordered regions span residues 480–504, 572–644, 667–737, and 761–817; these read QQQQ…NNNE, INEN…ENDN, SNNN…YPHY, and NNYN…NNPY. 3 stretches are compositionally biased toward acidic residues: residues 583 to 595, 604 to 615, and 624 to 644; these read NEDE…EDDY, EDEEEEQEEDDY, and EEEE…ENDN. 2 stretches are compositionally biased toward low complexity: residues 667-687 and 696-720; these read SNNN…NNHY and KNSI…SQSN.

The protein belongs to the DEAD box helicase family. DDX20 subfamily. In terms of assembly, part of the core SMN complex.

It is found in the cytoplasm. It localises to the nucleus. The catalysed reaction is ATP + H2O = ADP + phosphate + H(+). The SMN complex catalyzes the assembly of small nuclear ribonucleoproteins (snRNPs), the building blocks of the spliceosome, and thereby plays an important role in the splicing of cellular pre-mRNAs. Most spliceosomal snRNPs contain a common set of Sm proteins SNRPB, SNRPD1, SNRPD2, SNRPD3, SNRPE, SNRPF and SNRPG that assemble in a heptameric protein ring on the Sm site of the small nuclear RNA to form the core snRNP (Sm core). In the cytosol, the Sm proteins SNRPD1, SNRPD2, SNRPE, SNRPF and SNRPG are trapped in an inactive 6S pICln-Sm complex by the chaperone CLNS1A that controls the assembly of the core snRNP. To assemble core snRNPs, the SMN complex accepts the trapped 5Sm proteins from CLNS1A forming an intermediate. Binding of snRNA inside 5Sm triggers eviction of the SMN complex, thereby allowing binding of SNRPD3 and SNRPB to complete assembly of the core snRNP. May also play a role in the metabolism of small nucleolar ribonucleoprotein (snoRNPs). This Dictyostelium discoideum (Social amoeba) protein is Probable ATP-dependent RNA helicase ddx20 (ddx20).